Consider the following 182-residue polypeptide: Large ribosomal subunit protein uL5c (182 aa).

The protein belongs to the universal ribosomal protein uL5 family. As to quaternary structure, part of the 50S ribosomal subunit; contacts the 5S rRNA.

Its subcellular location is the plastid. The protein localises to the chloroplast. Functionally, binds 5S rRNA, forms part of the central protuberance of the 50S subunit. The protein is Large ribosomal subunit protein uL5c (rpl5) of Cyanidium caldarium (Red alga).